The sequence spans 101 residues: Ascorbate-specific PTS system EIIB component (101 aa).

The region spanning 1–100 is the PTS EIIB type-2 domain; sequence MTVRILAVCG…VIKEHFPQDV (100 aa). The active-site Phosphocysteine intermediate is the cysteine 9. Position 9 is a phosphocysteine (cysteine 9).

The protein localises to the cytoplasm. It carries out the reaction N(pros)-phospho-L-histidyl-[protein] + L-ascorbate(out) = L-ascorbate 6-phosphate(in) + L-histidyl-[protein]. The phosphoenolpyruvate-dependent sugar phosphotransferase system (sugar PTS), a major carbohydrate active transport system, catalyzes the phosphorylation of incoming sugar substrates concomitantly with their translocation across the cell membrane. The enzyme II UlaABC PTS system is involved in ascorbate transport. This Escherichia coli O157:H7 protein is Ascorbate-specific PTS system EIIB component (ulaB).